The chain runs to 197 residues: Adenine phosphoribosyltransferase (197 aa).

It belongs to the purine/pyrimidine phosphoribosyltransferase family. In terms of assembly, homodimer.

It localises to the cytoplasm. The catalysed reaction is AMP + diphosphate = 5-phospho-alpha-D-ribose 1-diphosphate + adenine. The protein operates within purine metabolism; AMP biosynthesis via salvage pathway; AMP from adenine: step 1/1. Its function is as follows. Catalyzes a salvage reaction resulting in the formation of AMP, that is energically less costly than de novo synthesis. The chain is Adenine phosphoribosyltransferase from Ralstonia nicotianae (strain ATCC BAA-1114 / GMI1000) (Ralstonia solanacearum).